Reading from the N-terminus, the 173-residue chain is uncharacterized protein (173 aa).

In terms of domain architecture, MSP spans 16-133; sequence DLVLRPETIT…KHVLIRFPNK (118 aa). Positions 141–163 are enriched in basic and acidic residues; that stretch reads KKMEEDDMKQQKERNKLSNEKMG. The segment at 141–173 is disordered; that stretch reads KKMEEDDMKQQKERNKLSNEKMGIRNQNMGEKK.

This is an uncharacterized protein from Caenorhabditis elegans.